The following is a 220-amino-acid chain: A-type ATP synthase subunit K (220 aa).

6 helical membrane passes run Leu5–Ile25, Phe63–Ala83, Leu90–Ala110, Leu125–Phe145, Ala155–Ile175, and Leu195–Ile215.

Belongs to the V-ATPase proteolipid subunit family. In terms of assembly, the A-type ATPase is composed of subunits A(3), B(3), C, D, E(1 or 2), F, H(2), I and K(x). Subunit K dimerizes and may form higher oligomers.

Its subcellular location is the cell membrane. Functionally, component of the A-type ATP synthase that produces ATP from ADP in the presence of a proton gradient across the membrane. The sequence is that of A-type ATP synthase subunit K from Methanocaldococcus jannaschii (strain ATCC 43067 / DSM 2661 / JAL-1 / JCM 10045 / NBRC 100440) (Methanococcus jannaschii).